Here is a 119-residue protein sequence, read N- to C-terminus: MRNKYIESFEKAQLENRNIPEFRAGDTVKVAVRIKEGSKERVQNYEGLCIAIRGQGTGRTFMVRKMGANSVGVERIFPLYSDSIESIEVLRKGRVRRAKLFYLRELKGKAARIKELRRK.

The protein belongs to the bacterial ribosomal protein bL19 family.

In terms of biological role, this protein is located at the 30S-50S ribosomal subunit interface and may play a role in the structure and function of the aminoacyl-tRNA binding site. This is Large ribosomal subunit protein bL19 from Sulfurovum sp. (strain NBC37-1).